Reading from the N-terminus, the 257-residue chain is Pyrroline-5-carboxylate reductase (257 aa).

The protein belongs to the pyrroline-5-carboxylate reductase family.

The protein localises to the cytoplasm. The catalysed reaction is L-proline + NADP(+) = (S)-1-pyrroline-5-carboxylate + NADPH + 2 H(+). The enzyme catalyses L-proline + NAD(+) = (S)-1-pyrroline-5-carboxylate + NADH + 2 H(+). It participates in amino-acid biosynthesis; L-proline biosynthesis; L-proline from L-glutamate 5-semialdehyde: step 1/1. Catalyzes the reduction of 1-pyrroline-5-carboxylate (PCA) to L-proline. The chain is Pyrroline-5-carboxylate reductase from Helicobacter pylori (strain ATCC 700392 / 26695) (Campylobacter pylori).